A 123-amino-acid polypeptide reads, in one-letter code: MPTINQLIRHGRESKGDKSTAPALRSCPQKRGVCTRVYTTTPKKPNSALRKVARVRLTNGVEVTSYIPGVGHNLQEHSVVLIRGGRVKDLPGVRYHIVRGTLDSVGVKGRMKSRSKYGAKRPK.

Asp89 carries the post-translational modification 3-methylthioaspartic acid.

Belongs to the universal ribosomal protein uS12 family. Part of the 30S ribosomal subunit. Contacts proteins S8 and S17. May interact with IF1 in the 30S initiation complex.

With S4 and S5 plays an important role in translational accuracy. Its function is as follows. Interacts with and stabilizes bases of the 16S rRNA that are involved in tRNA selection in the A site and with the mRNA backbone. Located at the interface of the 30S and 50S subunits, it traverses the body of the 30S subunit contacting proteins on the other side and probably holding the rRNA structure together. The combined cluster of proteins S8, S12 and S17 appears to hold together the shoulder and platform of the 30S subunit. This chain is Small ribosomal subunit protein uS12, found in Citrifermentans bemidjiense (strain ATCC BAA-1014 / DSM 16622 / JCM 12645 / Bem) (Geobacter bemidjiensis).